The sequence spans 444 residues: MTGKSPEVIPHTPVVQDLRAAREIFWINPHYRATKEFKEAQFGISLSDIHDAEERLRRFAPYLAKAFPETQPAQGLIESPIVPIKRMQSYLESRYGVQIPGDIWLKCDHQLPISGSIKARGGIYEVLKHAEETLIKQGLLTREDDYARLKDSSFRDVLSHYKIAVGSTGNLGLSIGVMGAELGFKVTVHMSADAKGWKKALLRSKGVEVIEYTSDYSKAVEEGRRQAEGDSRCHFIDDENSRDLFLGYAVAGLRLKEQLEKLNRKVDADHPLFVYLPCGVGGGPGGVTFGLKQVFQEHVHCFFAEPTHSPCMVLGLATGLHDGIAVQDIGLDNKTEADGLAVGRASRFVGKIMAGLLSGAFTVEDAELFRLLQALDHAEGIQCEPSALAGMAGPARLLLCKEGLQYIREHRLEEGLKRGTHLIWATGGSLVPVEVMKDYLSRGK.

Lysine 118 bears the N6-(pyridoxal phosphate)lysine mark.

Belongs to the serine/threonine dehydratase family. DsdA subfamily. Pyridoxal 5'-phosphate serves as cofactor.

It catalyses the reaction D-serine = pyruvate + NH4(+). This Desulfitobacterium hafniense (strain Y51) protein is Probable D-serine dehydratase.